We begin with the raw amino-acid sequence, 298 residues long: tRNA-uridine aminocarboxypropyltransferase 2 (298 aa).

Residue Met1 is modified to N-acetylmethionine. Positions 1 to 52 (MESQKEARILQEPVARPPGASRSQTPNAKERQEGGPVPAAAALGAEADDDSA) are disordered. At Ser132 the chain carries Phosphoserine. The DXTW signature appears at 178 to 181 (DGTW).

This sequence belongs to the TDD superfamily. DTWD2 family.

It is found in the nucleus. It localises to the cytoplasm. It carries out the reaction a uridine in tRNA + S-adenosyl-L-methionine = a 3-[(3S)-3-amino-3-carboxypropyl]uridine in tRNA + S-methyl-5'-thioadenosine + H(+). Its function is as follows. Catalyzes the formation of 3-(3-amino-3-carboxypropyl)uridine (acp3U) at position 20a in the D-loop of several cytoplasmic tRNAs (acp3U(20a)). Also has a weak activity to form acp3U at position 20 in the D-loop of tRNAs (acp3U(20)). Involved in glycoRNA biosynthesis by mediating formation of acp3U, which acts as an attachment site for N-glycans on tRNAs. GlycoRNAs consist of RNAs modified with secretory N-glycans that are presented on the cell surface. In Macaca fascicularis (Crab-eating macaque), this protein is tRNA-uridine aminocarboxypropyltransferase 2.